The following is a 154-amino-acid chain: 6,7-dimethyl-8-ribityllumazine synthase (154 aa).

Residues Phe23, 57-59, and 81-83 each bind 5-amino-6-(D-ribitylamino)uracil; these read AFE and AII. 86-87 provides a ligand contact to (2S)-2-hydroxy-3-oxobutyl phosphate; that stretch reads ST. The active-site Proton donor is the His89. Phe114 serves as a coordination point for 5-amino-6-(D-ribitylamino)uracil. Arg128 serves as a coordination point for (2S)-2-hydroxy-3-oxobutyl phosphate.

The protein belongs to the DMRL synthase family.

The enzyme catalyses (2S)-2-hydroxy-3-oxobutyl phosphate + 5-amino-6-(D-ribitylamino)uracil = 6,7-dimethyl-8-(1-D-ribityl)lumazine + phosphate + 2 H2O + H(+). It participates in cofactor biosynthesis; riboflavin biosynthesis; riboflavin from 2-hydroxy-3-oxobutyl phosphate and 5-amino-6-(D-ribitylamino)uracil: step 1/2. In terms of biological role, catalyzes the formation of 6,7-dimethyl-8-ribityllumazine by condensation of 5-amino-6-(D-ribitylamino)uracil with 3,4-dihydroxy-2-butanone 4-phosphate. This is the penultimate step in the biosynthesis of riboflavin. The polypeptide is 6,7-dimethyl-8-ribityllumazine synthase (Nitratiruptor sp. (strain SB155-2)).